The chain runs to 153 residues: Pheromone-binding protein Gp-9 (153 aa).

Residues Met-1–Ala-19 form the signal peptide. 3 disulfide bridges follow: Cys-37/Cys-77, Cys-73/Cys-129, and Cys-118/Cys-138.

This sequence belongs to the PBP/GOBP family. Homodimer.

The protein resides in the secreted. Its function is as follows. Colony queen number, a major feature of social organization, is associated with worker genotype for Gp-9. Colonies are headed by either a single reproductive queen (monogyne form) or multiple queens (polygyne form). Differences in worker Gp-9 genotypes between social forms may cause differences in workers' abilities to recognize queens and regulate their numbers. This Solenopsis nigella gensterblumi (Fire ant) protein is Pheromone-binding protein Gp-9.